The following is a 287-amino-acid chain: MIKVETKTLPAISLGNLDSYIREANSWPMLSSQEEKYLSEKLFYHGDLNAAKTLILSHLRFVIHVSRNYSGYGLLQADLIQEGNIGLMKAVRRFNPKIGVRLVSFAVHWIKSEIHEYVLRNWRIVKVATTKSQRKLFFNLRKTKQRLGWFNDHELELVAQELGVKREDVREMESRMSAQDIALHHVPDNFREEQNFSYTIPYLKDSLSDFANHVEEDNWEAHKTNKLSNALSSLDERSRNIIHARWLDDSDHKMTLREIAHNYGISAERVRQLEKNAMKKLKVAIET.

Residues 54-123 (LILSHLRFVI…IHEYVLRNWR (70 aa)) are sigma-70 factor domain-2. Residues 78–81 (DLIQ) carry the Interaction with polymerase core subunit RpoC motif. The sigma-70 factor domain-4 stretch occupies residues 230–283 (ALSSLDERSRNIIHARWLDDSDHKMTLREIAHNYGISAERVRQLEKNAMKKLKV). The H-T-H motif DNA-binding region spans 256 to 275 (LREIAHNYGISAERVRQLEK).

Belongs to the sigma-70 factor family. RpoH subfamily. In terms of assembly, interacts with the RNA polymerase core enzyme.

Its subcellular location is the cytoplasm. In terms of biological role, sigma factors are initiation factors that promote the attachment of RNA polymerase to specific initiation sites and are then released. This sigma factor is involved in regulation of expression of heat shock genes. This Buchnera aphidicola subsp. Baizongia pistaciae (strain Bp) protein is RNA polymerase sigma factor RpoH.